We begin with the raw amino-acid sequence, 161 residues long: Allophycocyanin beta chain (161 aa).

An N4-methylasparagine modification is found at Asn-71. Residue Cys-81 participates in (2R,3E)-phycocyanobilin binding.

The protein belongs to the phycobiliprotein family. In terms of assembly, heterodimer of an alpha and a beta chain. Post-translationally, contains one covalently linked phycocyanobilin chromophore.

It localises to the plastid. The protein localises to the chloroplast thylakoid membrane. Functionally, light-harvesting photosynthetic bile pigment-protein from the phycobiliprotein complex. Allophycocyanin has a maximum absorption at approximately 650 nanometers. The chain is Allophycocyanin beta chain (apcB) from Pyropia haitanensis (Red seaweed).